Reading from the N-terminus, the 222-residue chain is Glutathione S-transferase (222 aa).

A GST N-terminal domain is found at Gly-3 to Gly-83. Glutathione-binding positions include Tyr-9, Arg-45, Gln-54–Val-55, and Gln-67–Ser-68. The region spanning Asp-85–Leu-208 is the GST C-terminal domain.

The protein belongs to the GST superfamily. Alpha family. As to quaternary structure, homodimer.

The protein resides in the cytoplasm. The catalysed reaction is RX + glutathione = an S-substituted glutathione + a halide anion + H(+). Conjugation of reduced glutathione to a wide number of exogenous and endogenous hydrophobic electrophiles. In Gallus gallus (Chicken), this protein is Glutathione S-transferase.